A 1090-amino-acid polypeptide reads, in one-letter code: ATP-dependent helicase/deoxyribonuclease subunit B (1090 aa).

7-14 is a binding site for ATP; the sequence is GPVGSGKS. The [4Fe-4S] cluster site is built by Cys-719, Cys-1035, Cys-1038, and Cys-1044.

The protein belongs to the helicase family. AddB/RexB type 1 subfamily. In terms of assembly, heterodimer of AddA and AddB. The cofactor is Mg(2+). It depends on [4Fe-4S] cluster as a cofactor.

Its function is as follows. The heterodimer acts as both an ATP-dependent DNA helicase and an ATP-dependent, dual-direction single-stranded exonuclease. Recognizes the chi site generating a DNA molecule suitable for the initiation of homologous recombination. The AddB subunit has 5' -&gt; 3' nuclease activity but not helicase activity. This chain is ATP-dependent helicase/deoxyribonuclease subunit B, found in Carboxydothermus hydrogenoformans (strain ATCC BAA-161 / DSM 6008 / Z-2901).